The primary structure comprises 209 residues: FMN-dependent NADH:quinone oxidoreductase (209 aa).

Residues serine 9 and 15–17 (SNS) contribute to the FMN site.

The protein belongs to the azoreductase type 1 family. As to quaternary structure, homodimer. FMN serves as cofactor.

The catalysed reaction is 2 a quinone + NADH + H(+) = 2 a 1,4-benzosemiquinone + NAD(+). It catalyses the reaction N,N-dimethyl-1,4-phenylenediamine + anthranilate + 2 NAD(+) = 2-(4-dimethylaminophenyl)diazenylbenzoate + 2 NADH + 2 H(+). Functionally, quinone reductase that provides resistance to thiol-specific stress caused by electrophilic quinones. Its function is as follows. Also exhibits azoreductase activity. Catalyzes the reductive cleavage of the azo bond in aromatic azo compounds to the corresponding amines. This Bordetella bronchiseptica (strain ATCC BAA-588 / NCTC 13252 / RB50) (Alcaligenes bronchisepticus) protein is FMN-dependent NADH:quinone oxidoreductase.